The primary structure comprises 208 residues: Claudin-like protein ZF-A89 (208 aa).

4 helical membrane-spanning segments follow: residues 8-28 (LLAT…CALP), 82-102 (ALVV…IAGG), 117-137 (VVVA…IPVC), and 160-180 (LGAS…GGAL).

The protein belongs to the claudin family.

The protein localises to the cell membrane. The protein resides in the cell junction. Its subcellular location is the tight junction. Its function is as follows. Component of tight junction (TJ) strands. This is Claudin-like protein ZF-A89 (cldnd) from Danio rerio (Zebrafish).